We begin with the raw amino-acid sequence, 174 residues long: Transgelin (174 aa).

The Calponin-homology (CH) domain maps to 3–109; the sequence is SQLEKEAREW…SIHSFSRYAA (107 aa).

As to quaternary structure, binds to actin.

It localises to the cytoplasm. In terms of biological role, has actin-binding and actin-bundling activity and is a component of the actin patch. Stabilizes actin filaments against disassembly. Cross-links F-actin and is required for the formation of the contractile F-actin ring. The polypeptide is Transgelin (stg1) (Schizosaccharomyces pombe (strain 972 / ATCC 24843) (Fission yeast)).